We begin with the raw amino-acid sequence, 733 residues long: Cell division cycle protein 48 homolog AF_1297 (733 aa).

ATP contacts are provided by residues glycine 223–threonine 230 and glycine 496–threonine 503.

This sequence belongs to the AAA ATPase family. CDC48 subfamily.

This Archaeoglobus fulgidus (strain ATCC 49558 / DSM 4304 / JCM 9628 / NBRC 100126 / VC-16) protein is Cell division cycle protein 48 homolog AF_1297.